The sequence spans 125 residues: Small ribosomal subunit protein uS17 (125 aa).

Disordered regions lie at residues 1–21 (MSSSPAQRHTRKTQIGFVSSR) and 101–125 (VAAQVPTKTTASNTPAPAEQPAPQA).

Belongs to the universal ribosomal protein uS17 family. In terms of assembly, part of the 30S ribosomal subunit.

Its function is as follows. One of the primary rRNA binding proteins, it binds specifically to the 5'-end of 16S ribosomal RNA. This chain is Small ribosomal subunit protein uS17, found in Opitutus terrae (strain DSM 11246 / JCM 15787 / PB90-1).